We begin with the raw amino-acid sequence, 158 residues long: MEIDGFQQLDLEKSVPSKKTTPKRIIHFVDGDIMEEYSTEEEEEEEKEEQSTNSTLDPSKLSWGPYLRFWAGRIASTSFSTCEFLGGRFAVFFGLTQPKYQYVLNEFYRIQNKKSDNKSERRGSKAQAAEVPNEKCHLEAGVQEYGTIQQDVTEAIPQ.

The span at 36-48 shows a compositional bias: acidic residues; sequence EYSTEEEEEEEKE. Residues 36–59 form a disordered region; that stretch reads EYSTEEEEEEEKEEQSTNSTLDPS.

This sequence belongs to the FAM177 family.

The protein is Protein FAM177B (FAM177B) of Homo sapiens (Human).